A 271-amino-acid chain; its full sequence is 3-methyl-2-oxobutanoate hydroxymethyltransferase (271 aa).

Mg(2+) is bound by residues Asp-49 and Asp-88. Residues 49 to 50, Asp-88, and Lys-118 each bind 3-methyl-2-oxobutanoate; that span reads DS. Glu-120 serves as a coordination point for Mg(2+). Glu-187 acts as the Proton acceptor in catalysis.

This sequence belongs to the PanB family. In terms of assembly, homodecamer; pentamer of dimers. Requires Mg(2+) as cofactor.

The protein resides in the cytoplasm. The enzyme catalyses 3-methyl-2-oxobutanoate + (6R)-5,10-methylene-5,6,7,8-tetrahydrofolate + H2O = 2-dehydropantoate + (6S)-5,6,7,8-tetrahydrofolate. It participates in cofactor biosynthesis; (R)-pantothenate biosynthesis; (R)-pantoate from 3-methyl-2-oxobutanoate: step 1/2. Functionally, catalyzes the reversible reaction in which hydroxymethyl group from 5,10-methylenetetrahydrofolate is transferred onto alpha-ketoisovalerate to form ketopantoate. The sequence is that of 3-methyl-2-oxobutanoate hydroxymethyltransferase from Bartonella bacilliformis (strain ATCC 35685 / KC583 / Herrer 020/F12,63).